We begin with the raw amino-acid sequence, 602 residues long: MHKYRTHNCSELQISDVGQEVKLSGWVHRRRDHGNLVFIDLRDHYGIIQIVFTDQNPQLMEDASRLRYESVVTVRGTVVARSEDTINNTLPTGHVEVLAVEFIVESAADTLPFVINTEKDAPEDSRLKHRFLDLRREKLHNNIILRSQIISHIRHLMMARGFTEFQTPILTASSPEGARDFLVPSRMHPGKFYALPQAPQQFKQLLMVSGFDRYFQIAPCFRDEDARADRSPGEFYQLDLEMSFVTQEDVFSTIEPVMYDLFNKFTDKKVSATPFVRIPYNESMLKYGSDKPDLRNTIIISDVTEIFRDSDFTIFRENIRKGSIVRAIPAPKAATMPRSFFDKMIEFAISEGAGGLGYIQFSETGETKGAVAKFLSTQQLDSLKATASISNGDAVFFVSDKKEKAARLAGKVRIRLGEELDLLEKDCFKFCWITDFPFYELNEETGKIDFSHNPFSMPQGGLEALENAKTTEALLELNAYQYDIVCNGIELSSGAIRNHKPDIMYKAFSIAGYSEEEVNKRFGGMIRAFKFGAPPHGGIAPGIDRIVMLLAEATNIREVIAFPLNQQAEDLLMNAPSYVEDKALKELSIMLSPSARKNAKKE.

Glu176 is an L-aspartate binding site. Residues 200–203 (QQFK) form an aspartate region. Residues Arg222 and His452 each coordinate L-aspartate. Position 222 to 224 (222 to 224 (RDE)) interacts with ATP. Position 490 (Glu490) interacts with ATP. Arg497 lines the L-aspartate pocket. 542–545 (GIDR) is a binding site for ATP.

This sequence belongs to the class-II aminoacyl-tRNA synthetase family. Type 1 subfamily. As to quaternary structure, homodimer.

The protein localises to the cytoplasm. The catalysed reaction is tRNA(Asx) + L-aspartate + ATP = L-aspartyl-tRNA(Asx) + AMP + diphosphate. Functionally, aspartyl-tRNA synthetase with relaxed tRNA specificity since it is able to aspartylate not only its cognate tRNA(Asp) but also tRNA(Asn). Reaction proceeds in two steps: L-aspartate is first activated by ATP to form Asp-AMP and then transferred to the acceptor end of tRNA(Asp/Asn). This Rickettsia akari (strain Hartford) protein is Aspartate--tRNA(Asp/Asn) ligase.